Consider the following 299-residue polypeptide: Acetaldehyde dehydrogenase 2 (299 aa).

Cysteine 130 (acyl-thioester intermediate) is an active-site residue. NAD(+) contacts are provided by residues 161–169 (SVGPGTRKN) and asparagine 272.

Belongs to the acetaldehyde dehydrogenase family.

The catalysed reaction is acetaldehyde + NAD(+) + CoA = acetyl-CoA + NADH + H(+). This Burkholderia lata (strain ATCC 17760 / DSM 23089 / LMG 22485 / NCIMB 9086 / R18194 / 383) protein is Acetaldehyde dehydrogenase 2.